Consider the following 651-residue polypeptide: Acetyl-coenzyme A synthetase (651 aa).

Residues 191-194 (RGGK), Thr311, and Asn335 contribute to the CoA site. ATP contacts are provided by residues 387–389 (GEP), 411–416 (DTWWQT), Asp500, and Arg515. Ser523 lines the CoA pocket. An ATP-binding site is contributed by Arg526. Residues Val537, His539, and Val542 each coordinate Mg(2+). Arg584 contacts CoA. Lys609 is subject to N6-acetyllysine.

This sequence belongs to the ATP-dependent AMP-binding enzyme family. Mg(2+) is required as a cofactor. Acetylated. Deacetylation by the SIR2-homolog deacetylase activates the enzyme.

It carries out the reaction acetate + ATP + CoA = acetyl-CoA + AMP + diphosphate. Its function is as follows. Catalyzes the conversion of acetate into acetyl-CoA (AcCoA), an essential intermediate at the junction of anabolic and catabolic pathways. AcsA undergoes a two-step reaction. In the first half reaction, AcsA combines acetate with ATP to form acetyl-adenylate (AcAMP) intermediate. In the second half reaction, it can then transfer the acetyl group from AcAMP to the sulfhydryl group of CoA, forming the product AcCoA. This chain is Acetyl-coenzyme A synthetase, found in Pseudomonas savastanoi pv. phaseolicola (strain 1448A / Race 6) (Pseudomonas syringae pv. phaseolicola (strain 1448A / Race 6)).